We begin with the raw amino-acid sequence, 172 residues long: Small ribosomal subunit protein uS5 (172 aa).

The S5 DRBM domain occupies 13–76; the sequence is LIEKMVAVNR…DQARRSMIKV (64 aa).

This sequence belongs to the universal ribosomal protein uS5 family. As to quaternary structure, part of the 30S ribosomal subunit. Contacts proteins S4 and S8.

Its function is as follows. With S4 and S12 plays an important role in translational accuracy. In terms of biological role, located at the back of the 30S subunit body where it stabilizes the conformation of the head with respect to the body. The protein is Small ribosomal subunit protein uS5 of Neisseria gonorrhoeae (strain ATCC 700825 / FA 1090).